The following is a 51-amino-acid chain: Ribosome biogenesis protein Nop10 (51 aa).

The protein belongs to the NOP10 family.

Its function is as follows. Involved in ribosome biogenesis; more specifically in 18S rRNA pseudouridylation and in cleavage of pre-rRNA. The chain is Ribosome biogenesis protein Nop10 from Methanococcus aeolicus (strain ATCC BAA-1280 / DSM 17508 / OCM 812 / Nankai-3).